Consider the following 253-residue polypeptide: 5-oxoprolinase subunit A (253 aa).

It belongs to the LamB/PxpA family. Forms a complex composed of PxpA, PxpB and PxpC.

The enzyme catalyses 5-oxo-L-proline + ATP + 2 H2O = L-glutamate + ADP + phosphate + H(+). Catalyzes the cleavage of 5-oxoproline to form L-glutamate coupled to the hydrolysis of ATP to ADP and inorganic phosphate. The chain is 5-oxoprolinase subunit A from Bacillus cereus (strain AH820).